A 491-amino-acid chain; its full sequence is MSDPRAVDPTARDIAEKLAPAYRTMLDAIAQVEPRIAEATRAELTDQRHSLKLIASENYASLPVLATMGTWFSDKYAEGTAGHRFYAGCQNVDTVETIAAEHACALFGAEHAYVQPHSGIDANLTAYWTILAHHIETPALSEFGARTVNDLTQVDWDTLRHRFNDQRAIGMSLDAGGHLTHGFRPNISGKMFDQRSYGTDPQTGLLDYDKVAELAREFKPLVIVAGYSAYPRRVNFAKMREIADEVGAVLMVDMAHFAGLVAGKVFTGDENPIPHAQVVTTTTHKSLRGPRGGMVLTTKDYADDVDRGCPMVLGGPLSHVMAAKAVALAEARTQTFRDYAQRVANNAKALAEGLMKRGVKLVTDGTDNHINLLDVTTSFGLTGRQAEAALLDAGVVTNRNSIPTDPNGAWYTSGIRIGTPALTSRGFGPDEFDQVAELIVTTLEATTPMTASTGKPGKAKYQIADGVAQKVHDAADELLGNFPLYPGLDLA.

(6S)-5,6,7,8-tetrahydrofolate-binding positions include Leu173 and Gly177–Leu179. An N6-(pyridoxal phosphate)lysine modification is found at Lys285.

It belongs to the SHMT family. In terms of assembly, homodimer. The cofactor is pyridoxal 5'-phosphate.

The protein resides in the cytoplasm. The enzyme catalyses (6R)-5,10-methylene-5,6,7,8-tetrahydrofolate + glycine + H2O = (6S)-5,6,7,8-tetrahydrofolate + L-serine. It participates in one-carbon metabolism; tetrahydrofolate interconversion. It functions in the pathway amino-acid biosynthesis; glycine biosynthesis; glycine from L-serine: step 1/1. Functionally, catalyzes the reversible interconversion of serine and glycine with tetrahydrofolate (THF) serving as the one-carbon carrier. This reaction serves as the major source of one-carbon groups required for the biosynthesis of purines, thymidylate, methionine, and other important biomolecules. Also exhibits THF-independent aldolase activity toward beta-hydroxyamino acids, producing glycine and aldehydes, via a retro-aldol mechanism. The protein is Serine hydroxymethyltransferase of Cutibacterium acnes (strain DSM 16379 / KPA171202) (Propionibacterium acnes).